We begin with the raw amino-acid sequence, 534 residues long: Monolignol oxidoreductase AtBBE-like 13 (534 aa).

Residues 1-29 (MAFVLMNNTNAFLVTLLLLSLSYIPLSFS) form the signal peptide. N-linked (GlcNAc...) asparagine glycans are attached at residues Asn-7 and Asn-59. The cysteines at positions 38 and 102 are disulfide-linked. Positions 117-181 (HDYEGLSYVS…KIHGFPAGLC (65 aa)) form a cross-link, 6-(S-cysteinyl)-8alpha-(pros-histidyl)-FAD (His-Cys).

The protein belongs to the oxygen-dependent FAD-linked oxidoreductase family. It depends on FAD as a cofactor. Post-translationally, the FAD cofactor is bound via a bicovalent 6-S-cysteinyl, 8alpha-N1-histidyl FAD linkage.

The protein localises to the secreted. The protein resides in the cell wall. It catalyses the reaction (E)-4-coumaroyl alcohol + A = (E)-4-coumaraldehyde + AH2. The catalysed reaction is (E)-coniferol + A = (E)-coniferaldehyde + AH2. The enzyme catalyses (E)-sinapyl alcohol + A = (E)-sinapaldehyde + AH2. It functions in the pathway phenylpropanoid metabolism. Its function is as follows. Mediates oxidation of p-hydroxylated derivatives of cinnamyl alcohol (i.e. the monolignols p-coumaryl-, coniferyl-, and sinapyl alcohol) to their corresponding aldehydes. The electron acceptor required for these reactions is not known, but does not seem to be dioxygen. Is much less efficient towards cinnamyl alcohol. The protein is Monolignol oxidoreductase AtBBE-like 13 of Arabidopsis thaliana (Mouse-ear cress).